The sequence spans 1050 residues: Beta-galactosidase (1050 aa).

Substrate-binding residues include Asn-110 and Asp-209. Asp-209 serves as a coordination point for Na(+). Mg(2+)-binding residues include Glu-432, His-434, and Glu-477. Residues Glu-477 and Glu-553 to His-556 contribute to the substrate site. Residue Glu-477 is the Proton donor of the active site. The Nucleophile role is filled by Glu-553. Asn-613 contributes to the Mg(2+) binding site. The Na(+) site is built by Phe-617 and Asn-620. The substrate site is built by Asn-620 and Trp-1023.

This sequence belongs to the glycosyl hydrolase 2 family. In terms of assembly, homotetramer. The cofactor is Mg(2+). It depends on Na(+) as a cofactor.

It carries out the reaction Hydrolysis of terminal non-reducing beta-D-galactose residues in beta-D-galactosides.. The protein is Beta-galactosidase of Yersinia enterocolitica serotype O:8 / biotype 1B (strain NCTC 13174 / 8081).